We begin with the raw amino-acid sequence, 306 residues long: MKVNMEYTKEKKVGEGTYAVVYLGCQHSTGRKIAIKEIKTSEFKDGLDMSAIREVKYLQEMQHPNVIELIDIFMAYDNLNLVLEFLPTDLEVVIKDKSILFTPADIKAWMLMTLRGVYHCHRNFILHRDLKPNNLLFSPDGQIKVADFGLARAIPAPHEILTSNVVTRWYRAPELLFGAKHYTSAIDIWSVGVIFAELMLRIPYLPGQNDVDQMEVTFRALGTPTDRDWPEVSSFMTYNKLQIYPPPSRDELRKRFIAASEYALDFMCGMLTMNPQKRWTAVQCLESDYFKELPPPSDPSSIKIRN.

The Protein kinase domain occupies 7 to 290; that stretch reads YTKEKKVGEG…AVQCLESDYF (284 aa). Residues 13–21 and K36 contribute to the ATP site; that span reads VGEGTYAVV. D129 acts as the Proton acceptor in catalysis. Residue T162 is modified to Phosphothreonine; by CAK.

Belongs to the protein kinase superfamily. CMGC Ser/Thr protein kinase family. CDC2/CDKX subfamily. In terms of assembly, CCL1 and KIN28 form the TFIIK complex, a component of the TFIIH holo complex. Component of a complex consisting of KIN28, CCL1 and TFB3. Interacts with TFB3. Also interacts with HNT1 and HOG1. In terms of processing, phosphorylation of Thr-162 regulates the affinity of interaction between CCL1, KIN28 and TFB3. Thr-162 phosphorylation does not vary through the cell cycle and is necessary for full kinase activity.

The protein resides in the nucleus. The catalysed reaction is [DNA-directed RNA polymerase] + ATP = phospho-[DNA-directed RNA polymerase] + ADP + H(+). Functionally, catalytic component of the TFIIK complex (KIN28-CCL1 dimer) which is the protein kinase component of transcription factor IIH (TFIIH) and phosphorylates the C-terminal domain of RNA polymerase II during transition from transcription to elongation after preinitiation complex (PIC) formation, thereby positively regulating transcription. TFIIH (or factor B) is essential for both basal and activated transcription, and is involved in nucleotide excision repair (NER) of damaged DNA. TFIIH has DNA-dependent ATPase activity and is essential for polymerase II transcription in vitro. Essential for cell proliferation. The sequence is that of Serine/threonine-protein kinase KIN28 (KIN28) from Saccharomyces cerevisiae (strain ATCC 204508 / S288c) (Baker's yeast).